The following is a 370-amino-acid chain: Polygalacturonase 1 (370 aa).

The signal sequence occupies residues 1–18 (MRTSILSMLALGAAAVSA). A disulfide bond links C36 and C51. 5 PbH1 repeats span residues 163-194 (ADNL…DVGE), 195-216 (STYI…AINS), 217-237 (GENI…SIGS), 246-267 (VKNV…RIKT), and 275-297 (VADV…VIEQ). D209 functions as the Proton donor in the catalytic mechanism. A disulfide bridge links C211 with C227. Residue H231 is part of the active site. N248 is a glycosylation site (N-linked (GlcNAc...) asparagine). Intrachain disulfides connect C337–C342 and C361–C370.

It belongs to the glycosyl hydrolase 28 family.

It is found in the secreted. The enzyme catalyses (1,4-alpha-D-galacturonosyl)n+m + H2O = (1,4-alpha-D-galacturonosyl)n + (1,4-alpha-D-galacturonosyl)m.. The sequence is that of Polygalacturonase 1 (PG1) from Penicillium olsonii.